A 326-amino-acid polypeptide reads, in one-letter code: Myeloid protein 1 (326 aa).

Positions Met1–Ala18 are cleaved as a signal peptide. 2 repeat units span residues Gln28 to Thr162 and Gln177 to Thr312. 3 disulfides stabilise this stretch: Cys37–Cys74, Cys48–Cys53, and Cys113–Cys156. 3 residues coordinate Zn(2+): His67, Asp71, and His152. Residues Asp307–Val326 are disordered.

This sequence belongs to the LECT2/MIM-1 family. In terms of processing, substrate for arginine-specific ADP-ribosyltransferase.

It localises to the cytoplasmic granule. The sequence is that of Myeloid protein 1 (MIM1) from Gallus gallus (Chicken).